A 476-amino-acid polypeptide reads, in one-letter code: Protein transport protein Sec61 subunit alpha isoform 2 (476 aa).

The Cytoplasmic portion of the chain corresponds to 1–33; sequence MGIKFLEVIKPFCAVLPEIQKPERKIQFREKVL. A helical membrane pass occupies residues 34-53; it reads WTAITLFIFLVCCQIPLFGI. Over 54–76 the chain is Lumenal; the sequence is MSSDSADPFYWMRVILASNRGTL. Residues 77 to 96 form a helical membrane-spanning segment; the sequence is MELGISPIVTSGLIMQLLAG. Topologically, residues 97–117 are cytoplasmic; it reads AKIIEVGDTPKDRALFNGAQK. The chain crosses the membrane as a helical span at residues 118-138; the sequence is LFGMIITIGQAIVYVMTGMYG. Residues 139-144 lie on the Lumenal side of the membrane; that stretch reads DPAEMG. Residues 145–165 form a helical membrane-spanning segment; sequence AGICLLIIIQLFVAGLIVLLL. Residues 166-172 are Cytoplasmic-facing; it reads DELLQKG. The helical transmembrane segment at 173 to 193 threads the bilayer; that stretch reads YGLGSGISLFIATNICETIVW. The Lumenal segment spans residues 194–240; that stretch reads KAFSPTTINTGRGTEFEGAVIALFHLLATRTDKVRALREAFYRQNLP. Residues 241-261 form a helical membrane-spanning segment; that stretch reads NLMNLIATVFVFAVVIYFQGF. At 262 to 288 the chain is on the cytoplasmic side; the sequence is RVDLPIKSARYRGQYSSYPIKLFYTSN. The helical transmembrane segment at 289-309 threads the bilayer; the sequence is IPIILQSALVSNLYVISQMLS. Residues 310–354 are Lumenal-facing; it reads VRFSGNFLVNLLGQWADVSGGGPARSYPVGGLCYYLSPPESMGAI. A helical transmembrane segment spans residues 355–375; sequence FEDPVHVVVYIIFMLGSCAFF. Over 376-420 the chain is Cytoplasmic; the sequence is SKTWIEVSGSSAKDVAKQLKEQQMVMRGHRDTSMVHELNRYIPTA. The helical transmembrane segment at 421-441 threads the bilayer; that stretch reads AAFGGLCIGALSVLADFLGAI. Residues 442-445 are Lumenal-facing; the sequence is GSGT. The helical transmembrane segment at 446-462 threads the bilayer; it reads GILLAVTIIYQYFEIFV. Residues 463–476 are Cytoplasmic-facing; that stretch reads KEQAEVGGMGALFF.

It belongs to the SecY/SEC61-alpha family. The SEC61 channel-forming translocon complex consists of channel-forming core components SEC61A1, SEC61B and SEC61G and different auxiliary components such as SEC62 and SEC63.

It is found in the endoplasmic reticulum membrane. Component of SEC61 channel-forming translocon complex that mediates transport of signal peptide-containing precursor polypeptides across the endoplasmic reticulum (ER). Forms a ribosome receptor and a gated pore in the ER membrane, both functions required for cotranslational translocation of nascent polypeptides. The polypeptide is Protein transport protein Sec61 subunit alpha isoform 2 (SEC61A2) (Homo sapiens (Human)).